We begin with the raw amino-acid sequence, 325 residues long: D site-binding protein (325 aa).

3 disordered regions span residues 1 to 99 (MARP…APGL), 127 to 200 (GLPP…DTVE), and 229 to 255 (RFSE…EQKD). Residues 17–28 (GPAGTPPGGGAL) show a composition bias toward gly residues. 2 stretches are compositionally biased toward low complexity: residues 29-38 (LGLRSLLQGT) and 57-80 (ALPA…PAGA). At Ser86 the chain carries Phosphoserine. Pro residues predominate over residues 129–153 (PPSPPPPGGPSPEPSPARTPAPSPG). A compositionally biased stretch (low complexity) spans 157 to 167 (CGSASPRSSPG). The region spanning 255–318 (DEKYWSRRYK…SHYRAVLSRY (64 aa)) is the bZIP domain. The tract at residues 257–279 (KYWSRRYKNNEAAKRSRDARRLK) is basic motif. The segment at 283 to 297 (ISVRAAFLEKENALL) is leucine-zipper.

Belongs to the bZIP family. PAR subfamily. In terms of assembly, binds DNA as a homodimer or a heterodimer. Can form a heterodimer with TEF. Ubiquitously expressed. Expressed in the suprachiasmatic nuclei (SCN) and in most peripheral tissues, with a strong circadian rhythmicity.

The protein localises to the nucleus. In terms of biological role, this transcriptional activator recognizes and binds to the sequence 5'-RTTAYGTAAY-3' found in the promoter of genes such as albumin, CYP2A4 and CYP2A5. It is not essential for circadian rhythm generation, but modulates important clock output genes. May be a direct target for regulation by the circadian pacemaker component clock. May affect circadian period and sleep regulation. The sequence is that of D site-binding protein (DBP) from Homo sapiens (Human).